The following is a 128-amino-acid chain: Small ribosomal subunit protein uS11 (128 aa).

This sequence belongs to the universal ribosomal protein uS11 family. Part of the 30S ribosomal subunit. Interacts with proteins S7 and S18. Binds to IF-3.

Its function is as follows. Located on the platform of the 30S subunit, it bridges several disparate RNA helices of the 16S rRNA. Forms part of the Shine-Dalgarno cleft in the 70S ribosome. The protein is Small ribosomal subunit protein uS11 of Wolbachia pipientis subsp. Culex pipiens (strain wPip).